A 444-amino-acid polypeptide reads, in one-letter code: Chitinase-like protein Idgf1 (444 aa).

An N-terminal signal peptide occupies residues 1–20 (MTSLLFVILNIILTLHLCAG). The region spanning 29-444 (KRLICYYDAQ…PILRSVRGHL (416 aa)) is the GH18 domain. A disulfide bridge connects residues Cys33 and Cys60. N-linked (GlcNAc...) asparagine glycans are attached at residues Asn213, Asn225, and Asn335. Cysteines 346 and 429 form a disulfide.

The protein belongs to the glycosyl hydrolase 18 family. IDGF subfamily. Glycosylated.

It is found in the secreted. Its function is as follows. Cooperates with insulin-like peptides to stimulate the proliferation, polarization and motility of imaginal disk cells. May act by stabilizing the binding of insulin-like peptides to its receptor through a simultaneous interaction with both molecules to form a multiprotein signaling complex. The protein is Chitinase-like protein Idgf1 (Idgf1) of Glossina morsitans morsitans (Savannah tsetse fly).